Reading from the N-terminus, the 137-residue chain is Nucleoside diphosphate kinase (137 aa).

6 residues coordinate ATP: lysine 9, phenylalanine 57, arginine 85, threonine 91, arginine 102, and asparagine 112. Residue histidine 115 is the Pros-phosphohistidine intermediate of the active site.

The protein belongs to the NDK family. Homotetramer. Mg(2+) is required as a cofactor.

It localises to the cytoplasm. The enzyme catalyses a 2'-deoxyribonucleoside 5'-diphosphate + ATP = a 2'-deoxyribonucleoside 5'-triphosphate + ADP. It catalyses the reaction a ribonucleoside 5'-diphosphate + ATP = a ribonucleoside 5'-triphosphate + ADP. Functionally, major role in the synthesis of nucleoside triphosphates other than ATP. The ATP gamma phosphate is transferred to the NDP beta phosphate via a ping-pong mechanism, using a phosphorylated active-site intermediate. The sequence is that of Nucleoside diphosphate kinase from Helicobacter hepaticus (strain ATCC 51449 / 3B1).